We begin with the raw amino-acid sequence, 721 residues long: Nitrogen permease regulator 3 (721 aa).

Residues 1–21 (MSYNLPNPSLIGILLIISTHS) form the signal peptide. Disordered stretches follow at residues 27–54 (YKQP…ETES) and 555–614 (DLEN…NINA). Acidic residues predominate over residues 37–54 (PDEDEGEYDQEDIAETES).

The protein belongs to the NPR3 family.

In terms of biological role, mediates inactivation of the TORC1 complex in response to amino acid starvation. Required for meiotic nuclear division. This Scheffersomyces stipitis (strain ATCC 58785 / CBS 6054 / NBRC 10063 / NRRL Y-11545) (Yeast) protein is Nitrogen permease regulator 3 (NPR3).